A 298-amino-acid polypeptide reads, in one-letter code: Acetyl-coenzyme A carboxylase carboxyl transferase subunit beta (298 aa).

The region spanning 25 to 295 (VWAKCANCGE…SADHREHVVA (271 aa)) is the CoA carboxyltransferase N-terminal domain. Zn(2+)-binding residues include cysteine 29, cysteine 32, cysteine 48, and cysteine 51. A C4-type zinc finger spans residues 29–51 (CANCGELTYQKQFNDALKVCPKC).

It belongs to the AccD/PCCB family. In terms of assembly, acetyl-CoA carboxylase is a heterohexamer composed of biotin carboxyl carrier protein (AccB), biotin carboxylase (AccC) and two subunits each of ACCase subunit alpha (AccA) and ACCase subunit beta (AccD). Requires Zn(2+) as cofactor.

The protein resides in the cytoplasm. It carries out the reaction N(6)-carboxybiotinyl-L-lysyl-[protein] + acetyl-CoA = N(6)-biotinyl-L-lysyl-[protein] + malonyl-CoA. The protein operates within lipid metabolism; malonyl-CoA biosynthesis; malonyl-CoA from acetyl-CoA: step 1/1. In terms of biological role, component of the acetyl coenzyme A carboxylase (ACC) complex. Biotin carboxylase (BC) catalyzes the carboxylation of biotin on its carrier protein (BCCP) and then the CO(2) group is transferred by the transcarboxylase to acetyl-CoA to form malonyl-CoA. This chain is Acetyl-coenzyme A carboxylase carboxyl transferase subunit beta, found in Herpetosiphon aurantiacus (strain ATCC 23779 / DSM 785 / 114-95).